The chain runs to 180 residues: Pituitary tumor-transforming gene 1 protein-interacting protein (180 aa).

Residues 1 to 32 form the signal peptide; it reads MAPGVARGPTPYWRLRLGGAALLLLLIPVAAA. Topologically, residues 33-96 are extracellular; it reads QEPPGAACSQ…RWGVCWVNFE (64 aa). Residues 39-92 enclose the PSI domain; it reads ACSQNTNKTCEECLKNVSCLWCNTNKACLDYPVTSVLPPASLCKLSSARWGVCW. 2 N-linked (GlcNAc...) asparagine glycosylation sites follow: asparagine 45 and asparagine 54. A helical transmembrane segment spans residues 97-117; sequence ALIITMSVVGGTLLLGIAICC. At 118-180 the chain is on the cytoplasmic side; sequence CCCCRRKRSR…ENPYARFENN (63 aa). Residues 130-165 are a coiled coil; the sequence is DRSEEKAMREREERRIRQEERRAEMKTRHDEIRKKY. Positions 131–157 are disordered; sequence RSEEKAMREREERRIRQEERRAEMKTR. Residue tyrosine 174 is modified to Phosphotyrosine.

Interacts with PTTG1. In terms of tissue distribution, ubiquitous.

The protein resides in the membrane. It is found in the cytoplasm. It localises to the nucleus. In terms of biological role, may facilitate PTTG1 nuclear translocation. The protein is Pituitary tumor-transforming gene 1 protein-interacting protein (PTTG1IP) of Homo sapiens (Human).